The primary structure comprises 265 residues: Tryptophan synthase alpha chain (265 aa).

Residues glutamate 49 and aspartate 60 each act as proton acceptor in the active site.

It belongs to the TrpA family. As to quaternary structure, tetramer of two alpha and two beta chains.

It catalyses the reaction (1S,2R)-1-C-(indol-3-yl)glycerol 3-phosphate + L-serine = D-glyceraldehyde 3-phosphate + L-tryptophan + H2O. Its pathway is amino-acid biosynthesis; L-tryptophan biosynthesis; L-tryptophan from chorismate: step 5/5. The alpha subunit is responsible for the aldol cleavage of indoleglycerol phosphate to indole and glyceraldehyde 3-phosphate. The chain is Tryptophan synthase alpha chain from Ralstonia nicotianae (strain ATCC BAA-1114 / GMI1000) (Ralstonia solanacearum).